An 862-amino-acid chain; its full sequence is Probable alpha,alpha-trehalose-phosphate synthase [UDP-forming] 11 (862 aa).

Ser-5 is modified (phosphoserine). The tract at residues 50–538 is glycosyltransferase; it reads PKRIVVSNQL…ARSYDQDLQR (489 aa). The segment at 838 to 862 is disordered; that stretch reads SKHEQQKKQSKFTFQQPMGQCRKKA.

This sequence in the N-terminal section; belongs to the glycosyltransferase 20 family. In the C-terminal section; belongs to the trehalose phosphatase family. As to expression, expressed in leaves, roots, stems and flowers.

It catalyses the reaction D-glucose 6-phosphate + UDP-alpha-D-glucose = alpha,alpha-trehalose 6-phosphate + UDP + H(+). The sequence is that of Probable alpha,alpha-trehalose-phosphate synthase [UDP-forming] 11 (TPS11) from Arabidopsis thaliana (Mouse-ear cress).